A 1118-amino-acid polypeptide reads, in one-letter code: Sodium-driven chloride bicarbonate exchanger (1118 aa).

4 disordered regions span residues 1 to 23 (MEIKDQGAQMEPLLPTRNDEEAV), 58 to 96 (GRKSHRRHRHRGHKHRKRDRERDSGLEDGRESPSFDTPS), 245 to 312 (KQSE…PPHQ), and 457 to 476 (NGTAAHGEAEPHGGHSGPEL). At 1–509 (MEIKDQGAQM…DFRDAFSLQC (509 aa)) the chain is on the cytoplasmic side. The segment covering 59-76 (RKSHRRHRHRGHKHRKRD) has biased composition (basic residues). The span at 77–90 (RERDSGLEDGRESP) shows a compositional bias: basic and acidic residues. The residue at position 89 (Ser89) is a Phosphoserine. Residue Thr94 is modified to Phosphothreonine. The segment covering 248-264 (EPNSMDKNAGQVVSPQS) has biased composition (polar residues). Ser276 is subject to Phosphoserine. Residues 510–530 (LASFLFLYCACMSPVITFGGL) traverse the membrane as a helical segment. Over 531-538 (LGEATEGR) the chain is Extracellular. The helical transmembrane segment at 539 to 559 (ISAIESLFGASMTGIAYSLFG) threads the bilayer. Residues 560-562 (GQP) lie on the Cytoplasmic side of the membrane. Residues 563–583 (LTILGSTGPVLVFEKILFKFC) form a helical membrane-spanning segment. Residues 584–596 (KEYGLSYLSLRAS) are Extracellular-facing. The chain crosses the membrane as a helical span at residues 597-617 (IGLWTATLCIILVATDASSLV). Topologically, residues 618 to 626 (CYITRFTEE) are cytoplasmic. A helical transmembrane segment spans residues 627–647 (AFASLICIIFIYEALEKLFEL). Topologically, residues 648-720 (SEAYPINMHN…VGRACGHDHP (73 aa)) are extracellular. 4 N-linked (GlcNAc...) asparagine glycosylation sites follow: Asn674, Asn677, Asn687, and Asn697. The chain crosses the membrane as a helical span at residues 721-741 (YVPDVLFWSVILFFSTVTLSA). Residues 742 to 762 (TLKQFKTSRYFPTKVRSIVSD) lie on the Cytoplasmic side of the membrane. The chain crosses the membrane as a helical span at residues 763-783 (FAVFLTILCMVLIDYAIGIPS). The Extracellular segment spans residues 784 to 809 (PKLQVPSVFKPTRDDRGWFVTPLGPN). A helical transmembrane segment spans residues 810–830 (PWWTVIAAIIPALLCTILIFM). The Cytoplasmic portion of the chain corresponds to 831 to 855 (DQQITAVIINRKEHKLKKGCGYHLD). Residues 856–876 (LLMVAVMLGVCSIMGLPWFVA) form a helical membrane-spanning segment. At 877 to 912 (ATVLSITHVNSLKLESECSAPGEQPKFLGIREQRVT) the chain is on the extracellular side. The chain crosses the membrane as a helical span at residues 913–933 (GLMIFILMGSSVFMTSILKFI). The Cytoplasmic portion of the chain corresponds to 934 to 935 (PM). Residues 936 to 956 (PVLYGVFLYMGASSLKGIQFF) form a helical membrane-spanning segment. Topologically, residues 957-998 (DRIKLFWMPAKHQPDFIYLRHVPLRKVHLFTIIQMSCLGLLW) are extracellular. The helical transmembrane segment at 999–1019 (IIKVSRAAIVFPMMVLALVFV) threads the bilayer. The Cytoplasmic portion of the chain corresponds to 1020–1118 (RKLMDLLFTK…SSFPSKSSPS (99 aa)). Phosphoserine is present on residues Ser1057 and Ser1085.

Belongs to the anion exchanger (TC 2.A.31) family. As to expression, predominantly expressed in the brain.

The protein resides in the basolateral cell membrane. The protein localises to the apical cell membrane. It is found in the cell projection. Its subcellular location is the dendrite. It localises to the axon. The protein resides in the perikaryon. The protein localises to the presynapse. It is found in the postsynapse. It carries out the reaction 2 hydrogencarbonate(out) + chloride(in) + Na(+)(out) = 2 hydrogencarbonate(in) + chloride(out) + Na(+)(in). Functionally, sodium/bicarbonate cotransporter which plays an important role in regulating intracellular pH. Has been shown to act as a sodium/bicarbonate cotransporter in exchange for intracellular chloride. Has also been shown to act as a sodium/biocarbonate cotransporter which does not couple net influx of bicarbonate to net efflux of chloride, with the observed chloride efflux being due to chloride self-exchange. Controls neuronal pH and may contribute to the secretion of cerebrospinal fluid. Acting on presynaptic intracellular pH, it promotes GABA release, reduces the excitability of CA1 pyramidal neurons, and modulates short-term synaptic plasticity. Required in retinal cells to maintain normal pH which is necessary for normal vision. In the kidney, likely to mediate bicarbonate reclamation in the apical membrane of the proximal tubules. The protein is Sodium-driven chloride bicarbonate exchanger of Homo sapiens (Human).